The primary structure comprises 352 residues: UDP-N-acetylglucosamine--N-acetylmuramyl-(pentapeptide) pyrophosphoryl-undecaprenol N-acetylglucosamine transferase (352 aa).

UDP-N-acetyl-alpha-D-glucosamine contacts are provided by Ser195 and Gln287.

The protein belongs to the glycosyltransferase 28 family. MurG subfamily.

Its subcellular location is the cell membrane. It carries out the reaction Mur2Ac(oyl-L-Ala-gamma-D-Glu-L-Lys-D-Ala-D-Ala)-di-trans,octa-cis-undecaprenyl diphosphate + UDP-N-acetyl-alpha-D-glucosamine = beta-D-GlcNAc-(1-&gt;4)-Mur2Ac(oyl-L-Ala-gamma-D-Glu-L-Lys-D-Ala-D-Ala)-di-trans,octa-cis-undecaprenyl diphosphate + UDP + H(+). It functions in the pathway cell wall biogenesis; peptidoglycan biosynthesis. Functionally, cell wall formation. Catalyzes the transfer of a GlcNAc subunit on undecaprenyl-pyrophosphoryl-MurNAc-pentapeptide (lipid intermediate I) to form undecaprenyl-pyrophosphoryl-MurNAc-(pentapeptide)GlcNAc (lipid intermediate II). The sequence is that of UDP-N-acetylglucosamine--N-acetylmuramyl-(pentapeptide) pyrophosphoryl-undecaprenol N-acetylglucosamine transferase from Streptococcus pneumoniae (strain Hungary19A-6).